The chain runs to 456 residues: Glutamyl-tRNA(Gln) amidotransferase subunit A (456 aa).

Catalysis depends on charge relay system residues K74 and S149. S173 serves as the catalytic Acyl-ester intermediate.

The protein belongs to the amidase family. GatA subfamily. Heterotrimer of A, B and C subunits.

The enzyme catalyses L-glutamyl-tRNA(Gln) + L-glutamine + ATP + H2O = L-glutaminyl-tRNA(Gln) + L-glutamate + ADP + phosphate + H(+). In terms of biological role, allows the formation of correctly charged Gln-tRNA(Gln) through the transamidation of misacylated Glu-tRNA(Gln) in organisms which lack glutaminyl-tRNA synthetase. The reaction takes place in the presence of glutamine and ATP through an activated gamma-phospho-Glu-tRNA(Gln). The chain is Glutamyl-tRNA(Gln) amidotransferase subunit A from Methanobrevibacter smithii (strain ATCC 35061 / DSM 861 / OCM 144 / PS).